Reading from the N-terminus, the 156-residue chain is Ribosomal RNA large subunit methyltransferase H (156 aa).

S-adenosyl-L-methionine is bound by residues Leu-73, Gly-104, and 123–128 (ISSMTL).

Belongs to the RNA methyltransferase RlmH family. Homodimer.

The protein localises to the cytoplasm. It carries out the reaction pseudouridine(1915) in 23S rRNA + S-adenosyl-L-methionine = N(3)-methylpseudouridine(1915) in 23S rRNA + S-adenosyl-L-homocysteine + H(+). In terms of biological role, specifically methylates the pseudouridine at position 1915 (m3Psi1915) in 23S rRNA. The protein is Ribosomal RNA large subunit methyltransferase H of Burkholderia cenocepacia (strain HI2424).